We begin with the raw amino-acid sequence, 847 residues long: Alpha-glucuronidase (847 aa).

Residues M1 to A19 form the signal peptide. N-linked (GlcNAc...) asparagine glycosylation is found at N52, N238, N321, N353, N586, N692, N740, and N767.

Belongs to the glycosyl hydrolase 67 family.

Its subcellular location is the secreted. The catalysed reaction is an alpha-D-glucuronoside + H2O = D-glucuronate + an alcohol. In terms of biological role, releases 4-O-methylglucuronic acid from xylan. This Hypocrea jecorina (Trichoderma reesei) protein is Alpha-glucuronidase.